The chain runs to 82 residues: Turripeptide Lol6.1 (82 aa).

Positions 1-23 (MRFHWIPTLTVLLVLSMSFGTEA) are cleaved as a signal peptide. A propeptide spanning residues 24-48 (IPXXXXXXXXXXXXXXXXXXXXXXX) is cleaved from the precursor. Intrachain disulfides connect C54–C66, C58–C71, and C65–C77.

As to expression, expressed by the venom duct.

It localises to the secreted. Functionally, acts as a neurotoxin by inhibiting an ion channel. This Iotyrris olangoensis (Sea snail) protein is Turripeptide Lol6.1.